The following is a 338-amino-acid chain: 1-aminocyclopropane-1-carboxylate deaminase (338 aa).

Residue Lys51 is modified to N6-(pyridoxal phosphate)lysine. Catalysis depends on Ser78, which acts as the Nucleophile.

This sequence belongs to the ACC deaminase/D-cysteine desulfhydrase family. As to quaternary structure, homotrimer. Pyridoxal 5'-phosphate is required as a cofactor.

The catalysed reaction is 1-aminocyclopropane-1-carboxylate + H2O = 2-oxobutanoate + NH4(+). Functionally, catalyzes a cyclopropane ring-opening reaction, the irreversible conversion of 1-aminocyclopropane-1-carboxylate (ACC) to ammonia and alpha-ketobutyrate. Allows growth on ACC as a nitrogen source. In Burkholderia thailandensis (strain ATCC 700388 / DSM 13276 / CCUG 48851 / CIP 106301 / E264), this protein is 1-aminocyclopropane-1-carboxylate deaminase.